A 2555-amino-acid chain; its full sequence is Plipastatin synthase subunit C (2555 aa).

The tract at residues 7–306 (IQDIYPLSFM…NTIPIRAQSD (300 aa)) is condensation 1. The segment at 491–894 (TYAELDMYAS…SIEGVREAAV (404 aa)) is adenylation 1. The Carrier 1 domain maps to 967 to 1042 (APRNVTEMKL…GLATVIREGT (76 aa)). S1002 is subject to O-(pantetheine 4'-phosphoryl)serine. Residues 1054 to 1344 (KQETYPVSSA…NTLALRTRPE (291 aa)) form a condensation 2 region. Residues 1532 to 1927 (TYEDLNSWAN…QIDGVKEAAV (396 aa)) form an adenylation 2 region. The 75-residue stretch at 2003-2077 (PPRNELEEQL…DLSPFIRKSE (75 aa)) folds into the Carrier 2 domain. S2038 bears the O-(pantetheine 4'-phosphoryl)serine mark. The interval 2085-2548 (IQGDVPWTPV…SLTAEDLDSI (464 aa)) is epimerization 3.

It belongs to the ATP-dependent AMP-binding enzyme family. It depends on pantetheine 4'-phosphate as a cofactor.

This protein is a multifunctional enzyme, able to activate and polymerize the amino acids Glu and Ala/Val as part of the biosynthesis of the lipopeptide antibiotic plipastatin. The Ala/Val residue is further epimerized to the D-isomer form. The activation sites for these amino acids consist of individual domains. This Bacillus subtilis (strain 168) protein is Plipastatin synthase subunit C (ppsC).